A 44-amino-acid polypeptide reads, in one-letter code: Small, acid-soluble spore protein N (44 aa).

The tract at residues 1–44 (MGNPKKNSKDFAPNHIGTQSKKAGGNKGKQMQDQTGKQPIVDNG) is disordered.

The protein belongs to the SspN family.

It localises to the spore core. This chain is Small, acid-soluble spore protein N, found in Bacillus anthracis (strain A0248).